Consider the following 297-residue polypeptide: tRNA dimethylallyltransferase (297 aa).

15–22 (GPTASGKS) is an ATP binding site. 17 to 22 (TASGKS) contributes to the substrate binding site. Interaction with substrate tRNA regions lie at residues 40–43 (DSMQ) and 164–168 (QRIVR).

This sequence belongs to the IPP transferase family. Monomer. Requires Mg(2+) as cofactor.

It carries out the reaction adenosine(37) in tRNA + dimethylallyl diphosphate = N(6)-dimethylallyladenosine(37) in tRNA + diphosphate. In terms of biological role, catalyzes the transfer of a dimethylallyl group onto the adenine at position 37 in tRNAs that read codons beginning with uridine, leading to the formation of N6-(dimethylallyl)adenosine (i(6)A). The sequence is that of tRNA dimethylallyltransferase from Rhizobium leguminosarum bv. trifolii (strain WSM2304).